We begin with the raw amino-acid sequence, 442 residues long: 3-oxoacyl-[acyl-carrier-protein] synthase homolog (442 aa).

The Ketosynthase family 3 (KS3) domain occupies 2–438 (SRRVVITGLG…GVNTSLLFKK (437 aa)). Active-site for beta-ketoacyl synthase activity residues include Cys-187, His-322, and His-362.

It belongs to the thiolase-like superfamily. Beta-ketoacyl-ACP synthases family.

The protein resides in the mitochondrion. The catalysed reaction is a fatty acyl-[ACP] + malonyl-[ACP] + H(+) = a 3-oxoacyl-[ACP] + holo-[ACP] + CO2. Functionally, possibly involved in the synthesis of a specialized molecule, probably related to a fatty acid, which is essential for mitochondrial respiration. Is essential for oxygen uptake and the presence of cytochromes A and B. The polypeptide is 3-oxoacyl-[acyl-carrier-protein] synthase homolog (CEM1) (Saccharomyces cerevisiae (strain ATCC 204508 / S288c) (Baker's yeast)).